Consider the following 530-residue polypeptide: GMP synthase [glutamine-hydrolyzing] (530 aa).

The 202-residue stretch at 4–205 folds into the Glutamine amidotransferase type-1 domain; sequence RILILDYGSQ…VREICGCEGD (202 aa). C84 (nucleophile) is an active-site residue. Residues H179 and E181 contribute to the active site. The region spanning 206-398 is the GMPS ATP-PPase domain; it reads WNMPDYISEA…LGLPPQMVYR (193 aa). 233–239 contacts ATP; sequence SGGVDSS.

As to quaternary structure, homodimer.

The enzyme catalyses XMP + L-glutamine + ATP + H2O = GMP + L-glutamate + AMP + diphosphate + 2 H(+). It functions in the pathway purine metabolism; GMP biosynthesis; GMP from XMP (L-Gln route): step 1/1. Catalyzes the synthesis of GMP from XMP. This is GMP synthase [glutamine-hydrolyzing] from Bordetella avium (strain 197N).